The following is a 71-amino-acid chain: Small ribosomal subunit protein bS21 (71 aa).

The protein belongs to the bacterial ribosomal protein bS21 family.

This chain is Small ribosomal subunit protein bS21, found in Acinetobacter baylyi (strain ATCC 33305 / BD413 / ADP1).